Reading from the N-terminus, the 501-residue chain is Probable cytosol aminopeptidase (501 aa).

The Mn(2+) site is built by Lys267 and Asp272. Residue Lys279 is part of the active site. Mn(2+) contacts are provided by Asp290, Asp349, and Glu351. Arg353 is a catalytic residue.

Belongs to the peptidase M17 family. Mn(2+) is required as a cofactor.

It is found in the cytoplasm. The enzyme catalyses Release of an N-terminal amino acid, Xaa-|-Yaa-, in which Xaa is preferably Leu, but may be other amino acids including Pro although not Arg or Lys, and Yaa may be Pro. Amino acid amides and methyl esters are also readily hydrolyzed, but rates on arylamides are exceedingly low.. It carries out the reaction Release of an N-terminal amino acid, preferentially leucine, but not glutamic or aspartic acids.. Its function is as follows. Presumably involved in the processing and regular turnover of intracellular proteins. Catalyzes the removal of unsubstituted N-terminal amino acids from various peptides. This chain is Probable cytosol aminopeptidase, found in Desulfovibrio desulfuricans (strain ATCC 27774 / DSM 6949 / MB).